A 733-amino-acid polypeptide reads, in one-letter code: Cyclic nucleotide-gated channel (733 aa).

Disordered stretches follow at residues 1 to 33 (MSTA…PTAS) and 67 to 95 (PNGN…IEVP). At 1–125 (MSTAEPAPDP…PSTDNFYYWT (125 aa)) the chain is on the cytoplasmic side. Positions 12-25 (NPSTSGLAPTTNGI) are enriched in polar residues. The chain crosses the membrane as a helical span at residues 126–148 (CVVTVAYIYNLLFVIARQVFNDL). The Extracellular portion of the chain corresponds to 149–197 (IGPSSQSLCRFYNGTLNSTTQVECTYNMLTNMKEMPTYSQYPDLGWSKY). Residues 198-217 (WHFRMLWVFFDLLMDCVYLI) form a helical membrane-spanning segment. Residues 218 to 251 (DTFLNYRMGYMDQGLVVREAEKVTKAYWQSKQYR) are Cytoplasmic-facing. Residues 252–265 (IDGISLIPLDYILG) form a helical membrane-spanning segment. Over 266–276 (WPIPYINWRGL) the chain is Extracellular. The chain crosses the membrane as a helical span at residues 277-287 (PILRLNRLIRY). Residues 288–308 (KRVRNCLERTETRSSMPNAFR) are Cytoplasmic-facing. Residues 309-331 (VVVVVWYIVIIIHWNACLYFWIS) traverse the membrane as a helical segment. Over 332 to 362 (EWIGLGTDAWVYGHLNKQSLPDDITDTLLRR) the chain is Extracellular. A run of 2 helical transmembrane segments spans residues 363–385 (YVYS…SPVR) and 386–411 (NIEY…GNVG). Residues 376 to 379 (TIGE) are selectivity filter. Glu379 lines the Na(+) pocket. Residues 412–733 (SMISNMSAAR…TGTESESLLK (322 aa)) lie on the Cytoplasmic side of the membrane. The C-linker stretch occupies residues 419–496 (AARTEFQNKM…TLRKVRIFQD (78 aa)). The interval 493 to 607 (IFQDCEAGLL…ALREYPDARK (115 aa)) is cyclic nucleotide-binding domain. 3',5'-cyclic GMP is bound at residue Gly559. Residue Glu560 coordinates 3',5'-cyclic AMP. 3',5'-cyclic GMP is bound by residues Ser562, Arg575, Thr576, Lys619, and Asp620. Arg575 contacts 3',5'-cyclic AMP. The tract at residues 694–733 (SIDGGDISTDGVDERVRPPRLRQTKTIDLPTGTESESLLK) is disordered.

The protein belongs to the cyclic nucleotide-gated cation channel (TC 1.A.1.5) family. In terms of assembly, homotetramer. As to expression, expressed at the sensory endings of thermosensory, gustatory, and olfactory neurons.

The protein localises to the cell membrane. The protein resides in the cell projection. Its subcellular location is the cilium. It carries out the reaction Ca(2+)(in) = Ca(2+)(out). The catalysed reaction is Na(+)(in) = Na(+)(out). It catalyses the reaction K(+)(in) = K(+)(out). Pore-forming subunit of the cyclic nucleotide-gated channel. Required for normal thermosensation and chemosensation sensory behavior. Required, downstream of receptor-type guanylate cyclase gcy-9, for CO2-mediated responses in BAG neurons. Required, downstream of receptor-type guanylate cyclase gcy-14, for alkaline pH-mediated responses in ASE-left (ASEL) neurons. Involved in the development of ASJ sensory neuron axon during late larval stages and in the maintenance of normal axon morphology in the adult. Regulates dauer formation. Required for the calcium flux to the cytoplasm in the ASJ sensory neurons upon the onset and removal of a nitric oxide (NO) stimulus, thereby promoting the ASJ-mediated behavioral avoidance response to NO-producing organisms like P.aeruginosa. In ASI and ASJ sensory neurons, controls behavioral response to P.aeruginosa by up-regulating the transcription of daf-7, a member of the TGF-beta family. In AWB and AWC sensory neurons, mediates the recognition of food odors which subsequently allows for the detection of preferred food sources. In AWC neurons, acts to promote expression of srsx-3, a member of the GPCR family. Binding to cGMP results in conformational changes at the hydrophobic gate that converts the protein from an inactive closed state to an active open state. This chain is Cyclic nucleotide-gated channel (tax-4), found in Caenorhabditis elegans.